We begin with the raw amino-acid sequence, 592 residues long: Zinc metalloproteinase dpy-31 (592 aa).

Residues 1-18 form the signal peptide; sequence MHKIFIIFGLLSLCAAHS. Positions 19–127 are excised as a propeptide; sequence LRDLSNKDEE…TEGKTRVKRK (109 aa). The interval 22 to 46 is disordered; the sequence is LSNKDEEDPPSSAPGVRKRRMMSEE. Residues 127–326 enclose the Peptidase M12A domain; it reads KFIGSNLRRW…IRLMNKIYCS (200 aa). N-linked (GlcNAc...) asparagine glycosylation occurs at asparagine 167. Intrachain disulfides connect cysteine 170-cysteine 325 and cysteine 193-cysteine 214. Histidine 222 contacts Zn(2+). Residue glutamate 223 is part of the active site. Histidine 226 and histidine 232 together coordinate Zn(2+). Positions 349–361 constitute an EGF-like domain; that stretch reads CRCPDGFTGQYCE. A disulfide bridge connects residues cysteine 371 and cysteine 399. A CUB domain is found at 371–487; sequence CGGKISLTRS…KGFEARARAV (117 aa). N-linked (GlcNAc...) asparagine glycosylation is present at asparagine 438. The 51-residue stretch at 490-540 folds into the TSP type-1 domain; that stretch reads AGNWNSWSPWTACSATCGACGSRMRTRTCPPGNACSGEPVETQICNTQACT. 3 cysteine pairs are disulfide-bonded: cysteine 502-cysteine 534, cysteine 506-cysteine 539, and cysteine 518-cysteine 524.

Zn(2+) is required as a cofactor. Expressed in hypodermis, rectal and vulval epithelial cells and amphid socket cells.

It localises to the secreted. Its function is as follows. Metalloprotease which cleaves the carboxyl terminus of procollagens, such as sqt-3, to mature collagens. Involved in cuticular collagen maturation. The sequence is that of Zinc metalloproteinase dpy-31 from Caenorhabditis elegans.